Here is a 201-residue protein sequence, read N- to C-terminus: NADH-ubiquinone oxidoreductase 21.3 kDa subunit (201 aa).

In terms of assembly, complex I is composed of about 40 different subunits.

It is found in the mitochondrion inner membrane. The enzyme catalyses a ubiquinone + NADH + 5 H(+)(in) = a ubiquinol + NAD(+) + 4 H(+)(out). Transfer of electrons from NADH to the respiratory chain. The immediate electron acceptor for the enzyme is believed to be ubiquinone. The protein is NADH-ubiquinone oxidoreductase 21.3 kDa subunit of Neurospora crassa (strain ATCC 24698 / 74-OR23-1A / CBS 708.71 / DSM 1257 / FGSC 987).